A 127-amino-acid polypeptide reads, in one-letter code: DNA-directed RNA polymerase subunit omega (127 aa).

The protein belongs to the RNA polymerase subunit omega family. As to quaternary structure, the RNAP catalytic core consists of 2 alpha, 1 beta, 1 beta' and 1 omega subunit. When a sigma factor is associated with the core the holoenzyme is formed, which can initiate transcription.

It catalyses the reaction RNA(n) + a ribonucleoside 5'-triphosphate = RNA(n+1) + diphosphate. Its function is as follows. Promotes RNA polymerase assembly. Latches the N- and C-terminal regions of the beta' subunit thereby facilitating its interaction with the beta and alpha subunits. This is DNA-directed RNA polymerase subunit omega from Rickettsia africae (strain ESF-5).